We begin with the raw amino-acid sequence, 142 residues long: Large ribosomal subunit protein uL13 (142 aa).

The protein belongs to the universal ribosomal protein uL13 family. In terms of assembly, part of the 50S ribosomal subunit.

Its function is as follows. This protein is one of the early assembly proteins of the 50S ribosomal subunit, although it is not seen to bind rRNA by itself. It is important during the early stages of 50S assembly. The chain is Large ribosomal subunit protein uL13 from Francisella philomiragia subsp. philomiragia (strain ATCC 25017 / CCUG 19701 / FSC 153 / O#319-036).